The chain runs to 287 residues: Prepilin leader peptidase/N-methyltransferase (287 aa).

6 helical membrane passes run 10–30, 101–121, 125–145, 177–197, 226–246, and 253–273; these read LGFP…NVVI, ISIQ…ASVW, FGWQ…MSGI, KPAL…WWLF, ILPI…IWLF, and ATPI…FFWG.

The protein belongs to the peptidase A24 family.

It localises to the cell inner membrane. It catalyses the reaction Typically cleaves a -Gly-|-Phe- bond to release an N-terminal, basic peptide of 5-8 residues from type IV prepilin, and then N-methylates the new N-terminal amino group, the methyl donor being S-adenosyl-L-methionine.. In terms of biological role, plays an essential role in type IV pili and type II pseudopili formation by proteolytically removing the leader sequence from substrate proteins and subsequently monomethylating the alpha-amino group of the newly exposed N-terminal phenylalanine. The protein is Prepilin leader peptidase/N-methyltransferase (xpsO) of Xanthomonas campestris pv. campestris (strain ATCC 33913 / DSM 3586 / NCPPB 528 / LMG 568 / P 25).